Reading from the N-terminus, the 94-residue chain is Large ribosomal subunit protein eL42 (94 aa).

Residues C11, C14, C70, and C73 each coordinate Zn(2+). Residues 11–73 (CPYCKKHTIH…IDLRFKCTEC (63 aa)) form a C4-type zinc finger.

This sequence belongs to the eukaryotic ribosomal protein eL42 family. In terms of assembly, part of the 50S ribosomal subunit. The cofactor is Zn(2+).

Functionally, binds to the 23S rRNA. This chain is Large ribosomal subunit protein eL42, found in Methanocaldococcus jannaschii (strain ATCC 43067 / DSM 2661 / JAL-1 / JCM 10045 / NBRC 100440) (Methanococcus jannaschii).